Consider the following 124-residue polypeptide: Glutaredoxin-2 (124 aa).

Cys13 and Cys16 are joined by a disulfide.

The protein belongs to the glutaredoxin family. As to quaternary structure, homodimer.

The protein resides in the host cytoplasm. In terms of biological role, glutaredoxin necessary for virion morphogenesis and virus replication. Functions as a thiol-disulfide transfer protein between membrane-associated OPG128 and substrates OPG095 or OPG053. The complete pathway for formation of disulfide bonds in intracellular virion membrane proteins sequentially involves oxidation of OPG072, OPG128 and OPG088. Exhibit thioltransferase and dehydroascorbate reductase activities in vitro. The polypeptide is Glutaredoxin-2 (OPG088) (Bos taurus (Bovine)).